The primary structure comprises 60 residues: Small ribosomal subunit protein bS21 (60 aa).

The tract at residues 39–60 is disordered; that stretch reads ETPQEKRKRKAVARRRQRTRRR. A compositionally biased stretch (basic residues) spans 44–60; the sequence is KRKRKAVARRRQRTRRR.

The protein belongs to the bacterial ribosomal protein bS21 family.

The polypeptide is Small ribosomal subunit protein bS21 (Microcystis aeruginosa (strain NIES-843 / IAM M-2473)).